Reading from the N-terminus, the 562-residue chain is Tissue-type plasminogen activator (562 aa).

The signal sequence occupies residues methionine 1–cysteine 19. Residues threonine 20–arginine 32 constitute a propeptide that is removed on maturation. The propeptide at glycine 33–arginine 35 is removed by plasmin. The Fibronectin type-I domain maps to valine 39–valine 81. 17 disulfides stabilise this stretch: cysteine 41–cysteine 71, cysteine 69–cysteine 78, cysteine 86–cysteine 97, cysteine 91–cysteine 108, cysteine 110–cysteine 119, cysteine 127–cysteine 208, cysteine 148–cysteine 190, cysteine 179–cysteine 203, cysteine 215–cysteine 296, cysteine 236–cysteine 278, cysteine 267–cysteine 291, cysteine 299–cysteine 430, cysteine 342–cysteine 358, cysteine 350–cysteine 419, cysteine 444–cysteine 519, cysteine 476–cysteine 492, and cysteine 509–cysteine 537. The tract at residues arginine 42–glutamine 52 is important for binding to annexin A2. Residues proline 82 to glutamate 120 form the EGF-like domain. O-linked (Fuc) threonine glycosylation occurs at threonine 96. Kringle domains follow at residues threonine 126 to cysteine 208 and glutamate 214 to cysteine 296. N-linked (GlcNAc...) asparagine glycosylation is present at asparagine 152. The 251-residue stretch at isoleucine 311–arginine 561 folds into the Peptidase S1 domain. Active-site charge relay system residues include histidine 357 and aspartate 406. Asparagine 483 carries an N-linked (GlcNAc...) asparagine glycan. Serine 513 acts as the Charge relay system in catalysis.

It belongs to the peptidase S1 family. In terms of assembly, heterodimer of chain A and chain B held by a disulfide bond. Binds to fibrin with high affinity. This interaction leads to an increase in the catalytic efficiency of the enzyme due to an increase in affinity for plasminogen. Similarly, binding to heparin increases the activation of plasminogen. Binds to annexin A2, cytokeratin-8, fibronectin and laminin. Binds to mannose receptor and the low-density lipoprotein receptor-related protein (LRP1); these proteins are involved in TPA clearance. Binds LRP1B; binding is followed by internalization and degradation. Forms heterodimer with SERPINA5. Interacts with SERPINE1. In complex with SERPINE1, interacts with SORL1. The single chain, almost fully active enzyme, can be further processed into a two-chain fully active form by a cleavage after Arg-310 catalyzed by plasmin, tissue kallikrein or factor Xa.

It is found in the secreted. The protein localises to the extracellular space. The catalysed reaction is Specific cleavage of Arg-|-Val bond in plasminogen to form plasmin.. Inhibited by SERPINA5. Inhibited by SERPINE1. In terms of biological role, converts the abundant, but inactive, zymogen plasminogen to plasmin by hydrolyzing a single Arg-Val bond in plasminogen. By controlling plasmin-mediated proteolysis, it plays an important role in tissue remodeling and degradation, in cell migration and many other physiopathological events. During oocyte activation, plays a role in cortical granule reaction in the zona reaction, which contributes to the block to polyspermy. In Sus scrofa (Pig), this protein is Tissue-type plasminogen activator (PLAT).